Here is a 286-residue protein sequence, read N- to C-terminus: MSELNESTTSKFVTINEKGLSNFRIHLNDAGEGEAVIMLHGGGPGAGGWSNYYRNIGPFVKAGYRVILKDAPALNKSDTVVMHEQRGVVYARSVKGMMHVLGIEEAHVVRKSMAGAGALNFALELPERTGKLILMGPGGLGNSLFTAMPMEGIKLLFKLYAEPSLDTLKQMLNVFLFDQSLITDELVQGRWANIQRNPEHLKNFLLSAQKVPLSAWDVSPRLPEIKAKTLVTWGRDDRFVPLDHGLKLVANMPDAQLHVFPRCVHWAQWEHADAFNRLTLDFLANG.

Substrate-binding positions include 42-43 (GG), Asn51, Lys111, Ser180, and Arg190. Residues 173–271 (NVFLFDQSLI…RCVHWAQWEH (99 aa)) enclose the AB hydrolase-1 domain. Residue His265 is the Proton acceptor of the active site. Trp266 contributes to the substrate binding site.

It belongs to the AB hydrolase superfamily. BphD family. Homodimer.

It catalyses the reaction 2,6-dioxo-6-phenylhexa-3-enoate + H2O = 2-oxopent-4-enoate + benzoate + H(+). Its pathway is xenobiotic degradation; biphenyl degradation; 2-hydroxy-2,4-pentadienoate and benzoate from biphenyl: step 4/4. Its function is as follows. Catalyzes an unusual C-C bond hydrolysis of 2-hydroxy-6-oxo-6-phenylhexa-2,4-dienoic acid (HOPDA) to produce benzoic acid and 2-hydroxy-2,4-pentadienoic acid (HPD). This Delftia acidovorans (Pseudomonas acidovorans) protein is 2-hydroxy-6-oxo-6-phenylhexa-2,4-dienoate hydrolase.